The primary structure comprises 391 residues: Lipid-A-disaccharide synthase (391 aa).

It belongs to the LpxB family.

The catalysed reaction is a lipid X + a UDP-2-N,3-O-bis[(3R)-3-hydroxyacyl]-alpha-D-glucosamine = a lipid A disaccharide + UDP + H(+). Its pathway is bacterial outer membrane biogenesis; LPS lipid A biosynthesis. Functionally, condensation of UDP-2,3-diacylglucosamine and 2,3-diacylglucosamine-1-phosphate to form lipid A disaccharide, a precursor of lipid A, a phosphorylated glycolipid that anchors the lipopolysaccharide to the outer membrane of the cell. The chain is Lipid-A-disaccharide synthase from Rickettsia akari (strain Hartford).